A 358-amino-acid chain; its full sequence is MFNSFGNIFRLTSFGESHGKGIGGVIDGFPAGIVIDEEFVQQELNRRRPGQSVITTSRKEADKVEFLSGIFEGKSTGCPIGFIVWNENQHSNDYNNLEKVYRPSHADYTYTVKYGIRDHRGGGRSSARETISRVVGGALAKLALRQLGIHITAYTSQVGPIKLEGNYTDYDLDLIETNPVRCPDPEKAKEMQDLIYKIKGEGDTIGGVLTCVIKGCPIGLGQPVYGKLHAALGNAMLSINAAKAFEYGDGFKGLKQKGSEQNDVFYNNNGRIETRTNHSGGIQGGISNGQDIFFRVAFKPVATVLMEQETVNIDGIDTTLKARGRHDPCVLPRAVPIVEAMAAMTILDYYLLDRMTQL.

Arginine 47 contacts NADP(+). FMN-binding positions include 124-126 (RSS), 240-241 (NA), glycine 284, 299-303 (KPVAT), and arginine 325.

Belongs to the chorismate synthase family. Homotetramer. It depends on FMNH2 as a cofactor.

The catalysed reaction is 5-O-(1-carboxyvinyl)-3-phosphoshikimate = chorismate + phosphate. Its pathway is metabolic intermediate biosynthesis; chorismate biosynthesis; chorismate from D-erythrose 4-phosphate and phosphoenolpyruvate: step 7/7. Catalyzes the anti-1,4-elimination of the C-3 phosphate and the C-6 proR hydrogen from 5-enolpyruvylshikimate-3-phosphate (EPSP) to yield chorismate, which is the branch point compound that serves as the starting substrate for the three terminal pathways of aromatic amino acid biosynthesis. This reaction introduces a second double bond into the aromatic ring system. This is Chorismate synthase from Bacteroides fragilis (strain YCH46).